The sequence spans 430 residues: Serine hydroxymethyltransferase (430 aa).

120–122 (GHI) is a (6S)-5,6,7,8-tetrahydrofolate binding site. K226 is modified (N6-(pyridoxal phosphate)lysine).

Belongs to the SHMT family. In terms of assembly, homodimer. Pyridoxal 5'-phosphate is required as a cofactor.

The protein resides in the cytoplasm. It participates in amino-acid biosynthesis; glycine biosynthesis; glycine from L-serine: step 1/1. Its function is as follows. Catalyzes the reversible interconversion of serine and glycine with a modified folate serving as the one-carbon carrier. Also exhibits a pteridine-independent aldolase activity toward beta-hydroxyamino acids, producing glycine and aldehydes, via a retro-aldol mechanism. The sequence is that of Serine hydroxymethyltransferase from Pyrobaculum neutrophilum (strain DSM 2338 / JCM 9278 / NBRC 100436 / V24Sta) (Thermoproteus neutrophilus).